The following is a 172-amino-acid chain: Translation initiation factor IF-3 (172 aa).

The protein belongs to the IF-3 family. As to quaternary structure, monomer.

It localises to the cytoplasm. Functionally, IF-3 binds to the 30S ribosomal subunit and shifts the equilibrium between 70S ribosomes and their 50S and 30S subunits in favor of the free subunits, thus enhancing the availability of 30S subunits on which protein synthesis initiation begins. The protein is Translation initiation factor IF-3 of Campylobacter concisus (strain 13826).